Consider the following 757-residue polypeptide: E3 ubiquitin-protein ligase SMURF1 (757 aa).

Residues 1-120 (MSNPGTRRNG…TGYQRLDLCK (120 aa)) form the C2 domain. Residues 193 to 237 (GNCRFVESPSQDQRLQAQRLRNPDVRGSLQTPQNRPHGHQSPELP) are disordered. Position 200 is a phosphoserine (S200). 2 consecutive WW domains span residues 234–267 (PELPEGYEQRTTVQGQVYFLHTQTGVSTWHDPRI) and 306–339 (GPLPPGWEVRSTVSGRIYFVDHNNRTTQFTDPRL). Glycyl lysine isopeptide (Lys-Gly) (interchain with G-Cter in ubiquitin) cross-links involve residues K381 and K383. The region spanning 420–757 (RPKDLKKRLM…VEETCGFAVE (338 aa)) is the HECT domain. Residue C725 is the Glycyl thioester intermediate of the active site.

As to quaternary structure, interacts with TRAF4. Interacts (via HECT domain) with FBXL15 (via LRR repeats). Interacts with SMAD7 and TGFBR1; SMAD7 recruits SMURF1 to TGFBR1 and regulates TGF-beta receptor degradation. Interacts with MAVS; the interaction is mediated by NDFIP1. Auto-ubiquitinated in presence of NDFIP1. Ubiquitinated by the SCF(FBXL15) complex at Lys-381 and Lys-383, leading to its degradation by the proteasome. Lys-383 is the primary ubiquitination site. Expressed in melanocytes.

The protein resides in the cytoplasm. The protein localises to the cell membrane. It catalyses the reaction S-ubiquitinyl-[E2 ubiquitin-conjugating enzyme]-L-cysteine + [acceptor protein]-L-lysine = [E2 ubiquitin-conjugating enzyme]-L-cysteine + N(6)-ubiquitinyl-[acceptor protein]-L-lysine.. Its pathway is protein modification; protein ubiquitination. E3 ubiquitin-protein ligase that acts as a negative regulator of BMP signaling pathway. Mediates ubiquitination and degradation of SMAD1 and SMAD5, 2 receptor-regulated SMADs specific for the BMP pathway. Promotes ubiquitination and subsequent proteasomal degradation of TRAF family members and RHOA. Promotes ubiquitination and subsequent proteasomal degradation of MAVS. Acts as an antagonist of TGF-beta signaling by ubiquitinating TGFBR1 and targeting it for degradation. Plays a role in dendrite formation by melanocytes. The chain is E3 ubiquitin-protein ligase SMURF1 (SMURF1) from Homo sapiens (Human).